Here is a 323-residue protein sequence, read N- to C-terminus: Viral cathepsin (323 aa).

An N-terminal signal peptide occupies residues 1–18 (MSKFLLYWFVYGVVCSAA). Positions 19-112 (YDILKAPNYF…VVLDRPPGKG (94 aa)) are cleaved as a propeptide — activation peptide. Disulfide bonds link Cys-133–Cys-174, Cys-167–Cys-207, and Cys-262–Cys-310. The active site involves Cys-136. Asn-158 carries an N-linked (GlcNAc...) asparagine; by host glycan. Residues His-269 and Asn-289 contribute to the active site.

It belongs to the peptidase C1 family. Post-translationally, synthesized as an inactive proenzyme and activated by proteolytic removal of the inhibitory propeptide.

The catalysed reaction is Endopeptidase of broad specificity, hydrolyzing substrates of both cathepsin L and cathepsin B.. Its function is as follows. Cysteine protease that plays an essential role in host liquefaction to facilitate horizontal transmission of the virus. May participate in the degradation of foreign protein expressed by the baculovirus system. The protein is Viral cathepsin (VCATH) of Lepidoptera (butterflies and moths).